The sequence spans 361 residues: 3-dehydroquinate synthase (361 aa).

Residues 106–110, 130–131, K143, and K152 each bind NAD(+); these read GVVGD and TT. Zn(2+) contacts are provided by E185, H248, and H265.

It belongs to the sugar phosphate cyclases superfamily. Dehydroquinate synthase family. NAD(+) is required as a cofactor. Requires Co(2+) as cofactor. Zn(2+) serves as cofactor.

The protein localises to the cytoplasm. It catalyses the reaction 7-phospho-2-dehydro-3-deoxy-D-arabino-heptonate = 3-dehydroquinate + phosphate. It functions in the pathway metabolic intermediate biosynthesis; chorismate biosynthesis; chorismate from D-erythrose 4-phosphate and phosphoenolpyruvate: step 2/7. Catalyzes the conversion of 3-deoxy-D-arabino-heptulosonate 7-phosphate (DAHP) to dehydroquinate (DHQ). This chain is 3-dehydroquinate synthase, found in Leptospira interrogans serogroup Icterohaemorrhagiae serovar copenhageni (strain Fiocruz L1-130).